A 313-amino-acid chain; its full sequence is Secreted mono- and diacylglycerol lipase MDL5 (313 aa).

An N-terminal signal peptide occupies residues 1 to 20; sequence MQLQYVLTLLWIIFAQNVFS. A disulfide bond links cysteine 66 and cysteine 306. N-linked (GlcNAc...) asparagine glycosylation is found at asparagine 72 and asparagine 111. Serine 180 serves as the catalytic Nucleophile. Aspartate 238 is a catalytic residue. Asparagine 263 is a glycosylation site (N-linked (GlcNAc...) asparagine). Histidine 290 is an active-site residue.

It belongs to the AB hydrolase superfamily. Lipase family. Class 3 subfamily.

The protein resides in the secreted. The protein localises to the cell wall. The catalysed reaction is a monoacylglycerol + H2O = glycerol + a fatty acid + H(+). It catalyses the reaction a diacylglycerol + H2O = a monoacylglycerol + a fatty acid + H(+). Secreted lipase involved in Dandruff and seborrheic dermatitis (D/SD) probably via lipase-mediated breakdown of sebaceous lipids and release of irritating free fatty acids. Shows activity against monoglyceride and diglyceride substrates, but not triglyceride substrates and does not exhibit regio-selective production of diacylglycerols. Cleaves oleic acid from 1,2 isomers of diolein on both the 1 and the 2 position of the glycerol backbone, resulting mainly in free fatty acids but no monoolein is detected. Shows activity on monoolein and liberates mostly free fatty acids, but can also perform the reverse reaction and produce diolein. This Malassezia globosa (strain ATCC MYA-4612 / CBS 7966) (Dandruff-associated fungus) protein is Secreted mono- and diacylglycerol lipase MDL5.